We begin with the raw amino-acid sequence, 343 residues long: 3-isopropylmalate dehydrogenase (343 aa).

Residues Arg-94, Arg-104, Arg-128, and Asp-218 each contribute to the substrate site. Residues Asp-218, Asp-242, and Asp-246 each contribute to the Mg(2+) site. 278 to 290 (GSAPDIAGQNKAN) lines the NAD(+) pocket.

Belongs to the isocitrate and isopropylmalate dehydrogenases family. LeuB type 2 subfamily. As to quaternary structure, homodimer. Mg(2+) is required as a cofactor. It depends on Mn(2+) as a cofactor.

The protein localises to the cytoplasm. The catalysed reaction is (2R,3S)-3-isopropylmalate + NAD(+) = 4-methyl-2-oxopentanoate + CO2 + NADH. The protein operates within amino-acid biosynthesis; L-leucine biosynthesis; L-leucine from 3-methyl-2-oxobutanoate: step 3/4. In terms of biological role, catalyzes the oxidation of 3-carboxy-2-hydroxy-4-methylpentanoate (3-isopropylmalate) to 3-carboxy-4-methyl-2-oxopentanoate. The product decarboxylates to 4-methyl-2 oxopentanoate. The protein is 3-isopropylmalate dehydrogenase of Bifidobacterium longum subsp. infantis (strain ATCC 15697 / DSM 20088 / JCM 1222 / NCTC 11817 / S12).